A 953-amino-acid chain; its full sequence is Calcium-transporting ATPase type 2C member 1 (953 aa).

At 1-104 the chain is on the cytoplasmic side; it reads MDNLLPQSRF…NEFDISEDEP (104 aa). The helical transmembrane segment at 105–125 threads the bilayer; that stretch reads LWKKYISQFKNPLIMLLLASA. Residues 126-138 are Lumenal-facing; that stretch reads VISVLMHQFDDAV. Residues 139–157 traverse the membrane as a helical segment; it reads SITVAILIVVTVAFVQEYR. The Cytoplasmic segment spans residues 158–296; it reads SEKSLEELSK…APKTPLQKSM (139 aa). Residues 297-316 form a helical membrane-spanning segment; the sequence is DLLGKQLSFYSFGIIGIIML. Residues 317–328 lie on the Lumenal side of the membrane; the sequence is VGWLLGKDILEM. A helical membrane pass occupies residues 329 to 346; that stretch reads FTISVSLAVAAIPEGLPI. Ca(2+) contacts are provided by Val337, Ala338, Ile340, and Glu342. Residues 347 to 733 are Cytoplasmic-facing; sequence VVTVTLALGV…EEGKGIYNNI (387 aa). Asp384 functions as the 4-aspartylphosphate intermediate in the catalytic mechanism. Positions 678 and 682 each coordinate Mg(2+). A helical membrane pass occupies residues 734–753; sequence KNFVRFQLSTSIAALTLISL. Over 754–763 the chain is Lumenal; that stretch reads ATLMNFPNPL. A helical transmembrane segment spans residues 764-784; it reads NAMQILWINIIMDGPPAQSLG. Ca(2+) contacts are provided by Asn772 and Asp776. The Cytoplasmic segment spans residues 785–804; that stretch reads VEPVDKDVIRKPPRNWKDSI. A helical membrane pass occupies residues 805 to 824; the sequence is LTKNLILKILVSSIIIVCGT. Residues 825 to 842 lie on the Lumenal side of the membrane; that stretch reads LFVFWRELRDNVITPRDT. The helical transmembrane segment at 843 to 862 threads the bilayer; that stretch reads TMTFTCFVFFDMFNALSSRS. The Cytoplasmic segment spans residues 863–875; it reads QTKSVFEIGLCSN. Residues 876 to 894 form a helical membrane-spanning segment; it reads KMFCYAVLGSIMGQLLVIY. Residues 895 to 909 are Lumenal-facing; it reads FPPLQKVFQTESLSI. A helical transmembrane segment spans residues 910–930; it reads LDLLFLLGLTSSVCIVAEIIK. Residues 931–953 lie on the Cytoplasmic side of the membrane; the sequence is KVERSREKIQKPVSSTSSSFLEV.

The protein belongs to the cation transport ATPase (P-type) (TC 3.A.3) family. Type IIA subfamily. As to quaternary structure, monomer. Homodimer.

The protein localises to the golgi apparatus. Its subcellular location is the trans-Golgi network membrane. The protein resides in the golgi stack membrane. It carries out the reaction Ca(2+)(in) + ATP + H2O = Ca(2+)(out) + ADP + phosphate + H(+). The catalysed reaction is Mn(2+)(in) + ATP + H2O = Mn(2+)(out) + ADP + phosphate + H(+). In terms of biological role, ATP-driven pump that supplies the Golgi apparatus with Ca(2+) and Mn(2+) ions, both essential cofactors for processing and trafficking of newly synthesized proteins in the secretory pathway. Within a catalytic cycle, acquires Ca(2+) or Mn(2+) ions on the cytoplasmic side of the membrane and delivers them to the lumenal side. The transfer of ions across the membrane is coupled to ATP hydrolysis and is associated with a transient phosphorylation that shifts the pump conformation from inward-facing to outward-facing state. Plays a primary role in the maintenance of Ca(2+) homeostasis in the trans-Golgi compartment with a functional impact on Golgi and post-Golgi protein sorting as well as a structural impact on cisternae morphology. Responsible for loading the Golgi stores with Ca(2+) ions in keratinocytes, contributing to keratinocyte differentiation and epidermis integrity. Participates in Ca(2+) and Mn(2+) ions uptake into the Golgi store of hippocampal neurons and regulates protein trafficking required for neural polarity. May also play a role in the maintenance of Ca(2+) and Mn(2+) homeostasis and signaling in the cytosol while preventing cytotoxicity. In Bos taurus (Bovine), this protein is Calcium-transporting ATPase type 2C member 1 (ATP2C1).